We begin with the raw amino-acid sequence, 697 residues long: uncharacterized protein (697 aa).

14 helical membrane passes run 65-85 (PVRN…VGIY), 106-126 (CTFR…LHNF), 131-151 (YRQS…EKAI), 163-183 (DAAL…DINE), 194-214 (LSSY…VPLG), 227-247 (TSAT…TASI), 286-306 (STNA…ANKD), 316-336 (PVTD…VLLE), 361-381 (SDEI…PEGV), 394-414 (MFEL…MAWE), 419-439 (ERML…EPYH), 450-470 (SVKR…YLAI), 487-507 (QGSQ…YKVW), and 558-578 (TSAG…HHRQ). Residues 246–321 (SINVRTSATT…NRFHPVTDIN (76 aa)) are disordered. Positions 251-298 (TSATTTESTNSNTNATTTESTNSSTNATTTASTNSSTNATTTESTNAS) are enriched in low complexity. The segment covering 299–321 (AKEDANKDGNAEDNRFHPVTDIN) has biased composition (basic and acidic residues).

The protein resides in the membrane. This is an uncharacterized protein from Saccharomyces cerevisiae (strain ATCC 204508 / S288c) (Baker's yeast).